Reading from the N-terminus, the 101-residue chain is RNA-binding protein Hfq (101 aa).

The 60-residue stretch at 9–68 (DPFLNALRRERVPVSIYLVNGIKLQGQVESFDQFVILLKNTVSQMVYKHAISTVVPSRPV) folds into the Sm domain. Positions 63–101 (VPSRPVSHHSNTPSGSTNNYHGSNPSAPQQPQQDSDDAE) are disordered. A compositionally biased stretch (polar residues) spans 70–86 (HHSNTPSGSTNNYHGSN).

It belongs to the Hfq family. In terms of assembly, homohexamer.

Functionally, RNA chaperone that binds small regulatory RNA (sRNAs) and mRNAs to facilitate mRNA translational regulation in response to envelope stress, environmental stress and changes in metabolite concentrations. Also binds with high specificity to tRNAs. The sequence is that of RNA-binding protein Hfq from Yersinia pseudotuberculosis serotype O:1b (strain IP 31758).